A 174-amino-acid polypeptide reads, in one-letter code: NADH-quinone oxidoreductase subunit B 1 (174 aa).

The [4Fe-4S] cluster site is built by C53, C54, C118, and C148.

Belongs to the complex I 20 kDa subunit family. As to quaternary structure, NDH-1 is composed of 14 different subunits. Subunits NuoB, C, D, E, F, and G constitute the peripheral sector of the complex. The cofactor is [4Fe-4S] cluster.

The protein localises to the cell inner membrane. The enzyme catalyses a quinone + NADH + 5 H(+)(in) = a quinol + NAD(+) + 4 H(+)(out). In terms of biological role, NDH-1 shuttles electrons from NADH, via FMN and iron-sulfur (Fe-S) centers, to quinones in the respiratory chain. The immediate electron acceptor for the enzyme in this species is believed to be ubiquinone. Couples the redox reaction to proton translocation (for every two electrons transferred, four hydrogen ions are translocated across the cytoplasmic membrane), and thus conserves the redox energy in a proton gradient. The protein is NADH-quinone oxidoreductase subunit B 1 of Cereibacter sphaeroides (strain KD131 / KCTC 12085) (Rhodobacter sphaeroides).